The primary structure comprises 464 residues: Siroheme synthase (464 aa).

Residues 1 to 203 (MEFLPLFHNL…GQGAEAERML (203 aa)) are precorrin-2 dehydrogenase /sirohydrochlorin ferrochelatase. NAD(+)-binding positions include 22–23 (EI) and 43–44 (PE). Ser128 bears the Phosphoserine mark. The tract at residues 216–464 (GEVYLVGAGP…AWFEGAQATL (249 aa)) is uroporphyrinogen-III C-methyltransferase. Residue Pro225 participates in S-adenosyl-L-methionine binding. Asp248 serves as the catalytic Proton acceptor. Residue Lys270 is the Proton donor of the active site. S-adenosyl-L-methionine-binding positions include 301 to 303 (GGD), Ile306, 331 to 332 (TA), Met383, and Gly412.

In the N-terminal section; belongs to the precorrin-2 dehydrogenase / sirohydrochlorin ferrochelatase family. It in the C-terminal section; belongs to the precorrin methyltransferase family.

It carries out the reaction uroporphyrinogen III + 2 S-adenosyl-L-methionine = precorrin-2 + 2 S-adenosyl-L-homocysteine + H(+). The catalysed reaction is precorrin-2 + NAD(+) = sirohydrochlorin + NADH + 2 H(+). It catalyses the reaction siroheme + 2 H(+) = sirohydrochlorin + Fe(2+). Its pathway is cofactor biosynthesis; adenosylcobalamin biosynthesis; precorrin-2 from uroporphyrinogen III: step 1/1. The protein operates within cofactor biosynthesis; adenosylcobalamin biosynthesis; sirohydrochlorin from precorrin-2: step 1/1. It functions in the pathway porphyrin-containing compound metabolism; siroheme biosynthesis; precorrin-2 from uroporphyrinogen III: step 1/1. It participates in porphyrin-containing compound metabolism; siroheme biosynthesis; siroheme from sirohydrochlorin: step 1/1. Its pathway is porphyrin-containing compound metabolism; siroheme biosynthesis; sirohydrochlorin from precorrin-2: step 1/1. In terms of biological role, multifunctional enzyme that catalyzes the SAM-dependent methylations of uroporphyrinogen III at position C-2 and C-7 to form precorrin-2 via precorrin-1. Then it catalyzes the NAD-dependent ring dehydrogenation of precorrin-2 to yield sirohydrochlorin. Finally, it catalyzes the ferrochelation of sirohydrochlorin to yield siroheme. The sequence is that of Siroheme synthase from Pseudomonas syringae pv. syringae (strain B728a).